A 734-amino-acid polypeptide reads, in one-letter code: Photosystem I P700 chlorophyll a apoprotein A2 (734 aa).

8 helical membrane-spanning segments follow: residues 46-69 (IFAS…FHVA), 135-158 (LYGG…LHLQ), 175-199 (LNHH…HVAI), 273-291 (MAHH…GHMY), 330-353 (LHFQ…QHMY), 369-395 (AALY…IFFI), 417-439 (AIIS…LYVH), and 517-535 (FLVH…LILV). [4Fe-4S] cluster-binding residues include Cys-559 and Cys-568. Transmembrane regions (helical) follow at residues 575–596 (AFYL…YWHW) and 643–665 (LSVW…MFLI). 3 residues coordinate chlorophyll a: His-654, Met-662, and Tyr-670. Trp-671 is a binding site for phylloquinone. The helical transmembrane segment at 707-727 (LVGLAHFSVGYIFTYAAFLIA) threads the bilayer.

The protein belongs to the PsaA/PsaB family. As to quaternary structure, the PsaA/B heterodimer binds the P700 chlorophyll special pair and subsequent electron acceptors. PSI consists of a core antenna complex that captures photons, and an electron transfer chain that converts photonic excitation into a charge separation. The eukaryotic PSI reaction center is composed of at least 11 subunits. The cofactor is P700 is a chlorophyll a/chlorophyll a' dimer, A0 is one or more chlorophyll a, A1 is one or both phylloquinones and FX is a shared 4Fe-4S iron-sulfur center..

Its subcellular location is the plastid. The protein resides in the chloroplast thylakoid membrane. It carries out the reaction reduced [plastocyanin] + hnu + oxidized [2Fe-2S]-[ferredoxin] = oxidized [plastocyanin] + reduced [2Fe-2S]-[ferredoxin]. Its function is as follows. PsaA and PsaB bind P700, the primary electron donor of photosystem I (PSI), as well as the electron acceptors A0, A1 and FX. PSI is a plastocyanin-ferredoxin oxidoreductase, converting photonic excitation into a charge separation, which transfers an electron from the donor P700 chlorophyll pair to the spectroscopically characterized acceptors A0, A1, FX, FA and FB in turn. Oxidized P700 is reduced on the lumenal side of the thylakoid membrane by plastocyanin. The chain is Photosystem I P700 chlorophyll a apoprotein A2 from Physcomitrium patens (Spreading-leaved earth moss).